We begin with the raw amino-acid sequence, 87 residues long: Small ribosomal subunit protein bS20 (87 aa).

Residues 1–26 are disordered; that stretch reads MANIKSAKKRAIQSEKRRKHNASRRS.

This sequence belongs to the bacterial ribosomal protein bS20 family.

Binds directly to 16S ribosomal RNA. In Photorhabdus laumondii subsp. laumondii (strain DSM 15139 / CIP 105565 / TT01) (Photorhabdus luminescens subsp. laumondii), this protein is Small ribosomal subunit protein bS20.